Here is a 338-residue protein sequence, read N- to C-terminus: Phospho-2-dehydro-3-deoxyheptonate aldolase (338 aa).

Belongs to the class-I DAHP synthase family. Homotetramer. Requires a divalent metal cation as cofactor.

The catalysed reaction is D-erythrose 4-phosphate + phosphoenolpyruvate + H2O = 7-phospho-2-dehydro-3-deoxy-D-arabino-heptonate + phosphate. The protein operates within metabolic intermediate biosynthesis; chorismate biosynthesis; chorismate from D-erythrose 4-phosphate and phosphoenolpyruvate: step 1/7. With respect to regulation, inhibited by L-phenylalanine and L-tyrosine. Functionally, catalyzes the condensation of phosphoenolpyruvate (PEP) and D-erythrose-4-phosphate (E4P) giving rise to 3-deoxy-D-arabino-heptulosonate-7-phosphate (DAHP). The sequence is that of Phospho-2-dehydro-3-deoxyheptonate aldolase (aroF) from Thermotoga maritima (strain ATCC 43589 / DSM 3109 / JCM 10099 / NBRC 100826 / MSB8).